Consider the following 359-residue polypeptide: Squamosa promoter-binding-like protein 13A (359 aa).

The disordered stretch occupies residues 75 to 94 (AKPEGSRSSSSKRTRGNGVG). The segment at 98-175 (MPICLVDGCD…DGHNRRRRKP (78 aa)) adopts an SBP-type zinc-finger fold. Cys-101, Cys-106, Cys-123, His-126, Cys-142, Cys-145, His-149, and Cys-161 together coordinate Zn(2+). A Bipartite nuclear localization signal motif is present at residues 158 to 174 (KRSCRKRLDGHNRRRRK).

Requires Zn(2+) as cofactor.

The protein localises to the nucleus. Functionally, trans-acting factor that binds specifically to the consensus nucleotide sequence 5'-TNCGTACAA-3'. This is Squamosa promoter-binding-like protein 13A (SPL13A) from Arabidopsis thaliana (Mouse-ear cress).